A 185-amino-acid chain; its full sequence is MISEVKQDAKSRMEKSLSVYLSDIDGIRTGRARTSVLNGIVVETYGGRVKLNTISSVSVSDNKTLMIKVWDSNNIGAIKTAIMNSNLGFGISCEATTIRLTVPDMTQDMRKNLVKLLGKISEDCRVSIRNIRRDIMDRLKVMQDSKEISEDDLRVAGVEIQKITDDIMKKVNDAFTSKEKELLHV.

The protein belongs to the RRF family.

The protein localises to the cytoplasm. Responsible for the release of ribosomes from messenger RNA at the termination of protein biosynthesis. May increase the efficiency of translation by recycling ribosomes from one round of translation to another. The polypeptide is Ribosome-recycling factor (Ehrlichia chaffeensis (strain ATCC CRL-10679 / Arkansas)).